Reading from the N-terminus, the 495-residue chain is ATP synthase subunit beta, chloroplastic (495 aa).

172 to 179 contributes to the ATP binding site; it reads GGAGVGKT.

Belongs to the ATPase alpha/beta chains family. As to quaternary structure, F-type ATPases have 2 components, CF(1) - the catalytic core - and CF(0) - the membrane proton channel. CF(1) has five subunits: alpha(3), beta(3), gamma(1), delta(1), epsilon(1). CF(0) has four main subunits: a(1), b(1), b'(1) and c(9-12).

The protein resides in the plastid. It localises to the chloroplast thylakoid membrane. The catalysed reaction is ATP + H2O + 4 H(+)(in) = ADP + phosphate + 5 H(+)(out). Its function is as follows. Produces ATP from ADP in the presence of a proton gradient across the membrane. The catalytic sites are hosted primarily by the beta subunits. This is ATP synthase subunit beta, chloroplastic from Brimeura amethystina (Spanish hyacinth).